Here is a 102-residue protein sequence, read N- to C-terminus: Cytochrome b (102 aa).

The next 3 membrane-spanning stretches (helical) occupy residues 1–21, 45–66, and 81–101; these read FGSLLGVCLITQILTGLFLAM, WLIRNIHTNGASLFFICIYMHI, and WNIGVILFLMTMATAFMGYVF. The heme b site is built by histidine 51 and histidine 65.

This sequence belongs to the cytochrome b family. In terms of assembly, the cytochrome bc1 complex contains 3 respiratory subunits (MT-CYB, CYC1 and UQCRFS1), 2 core proteins (UQCRC1 and UQCRC2) and probably 6 low-molecular weight proteins. It depends on heme b as a cofactor.

Its subcellular location is the mitochondrion inner membrane. Functionally, component of the ubiquinol-cytochrome c reductase complex (complex III or cytochrome b-c1 complex) that is part of the mitochondrial respiratory chain. The b-c1 complex mediates electron transfer from ubiquinol to cytochrome c. Contributes to the generation of a proton gradient across the mitochondrial membrane that is then used for ATP synthesis. The polypeptide is Cytochrome b (mt-cyb) (Plethodon yonahlossee (Yonahlossee salamander)).